Here is a 465-residue protein sequence, read N- to C-terminus: Cysteine--tRNA ligase (465 aa).

Cysteine 29 contacts Zn(2+). Positions 31–41 (PTVYNYIHIGN) match the 'HIGH' region motif. Positions 209, 234, and 238 each coordinate Zn(2+). Positions 266–270 (KMSKS) match the 'KMSKS' region motif. Lysine 269 contacts ATP. The residue at position 270 (serine 270) is a Phosphoserine.

This sequence belongs to the class-I aminoacyl-tRNA synthetase family. As to quaternary structure, monomer. Zn(2+) is required as a cofactor.

Its subcellular location is the cytoplasm. The catalysed reaction is tRNA(Cys) + L-cysteine + ATP = L-cysteinyl-tRNA(Cys) + AMP + diphosphate. In Bacillus cytotoxicus (strain DSM 22905 / CIP 110041 / 391-98 / NVH 391-98), this protein is Cysteine--tRNA ligase.